Here is a 109-residue protein sequence, read N- to C-terminus: Nucleoid-associated protein PC1_1077 (109 aa).

The protein belongs to the YbaB/EbfC family. Homodimer.

It is found in the cytoplasm. It localises to the nucleoid. Binds to DNA and alters its conformation. May be involved in regulation of gene expression, nucleoid organization and DNA protection. The chain is Nucleoid-associated protein PC1_1077 from Pectobacterium carotovorum subsp. carotovorum (strain PC1).